The following is a 72-amino-acid chain: UPF0270 protein YheU (72 aa).

Belongs to the UPF0270 family.

In Salmonella agona (strain SL483), this protein is UPF0270 protein YheU.